The sequence spans 271 residues: Undecaprenyl-diphosphatase (271 aa).

The next 8 helical transmembrane spans lie at 5–25 (YALF…FLPV), 45–65 (AATF…AVFW), 86–106 (TLSL…GLAI), 114–134 (LFGP…LIIA), 149–169 (ISYK…WPGF), 189–209 (AAEF…GLDL), 226–246 (VGFI…LALI), and 251–271 (FIPF…VFVA).

This sequence belongs to the UppP family.

Its subcellular location is the cell inner membrane. The catalysed reaction is di-trans,octa-cis-undecaprenyl diphosphate + H2O = di-trans,octa-cis-undecaprenyl phosphate + phosphate + H(+). Its function is as follows. Catalyzes the dephosphorylation of undecaprenyl diphosphate (UPP). Confers resistance to bacitracin. The protein is Undecaprenyl-diphosphatase of Aeromonas hydrophila subsp. hydrophila (strain ATCC 7966 / DSM 30187 / BCRC 13018 / CCUG 14551 / JCM 1027 / KCTC 2358 / NCIMB 9240 / NCTC 8049).